Consider the following 547-residue polypeptide: Probable pectinesterase/pectinesterase inhibitor 12 (547 aa).

The N-terminal stretch at 1–23 (MALSSFNLSSLLFLLFFTPSVFS) is a signal peptide. Positions 31-185 (NPHETSATSF…YKHISNSLSA (155 aa)) are pectinesterase inhibitor 12. Residues N131, N247, N260, and N303 are each glycosylated (N-linked (GlcNAc...) asparagine). The segment at 237 to 533 (SLVVAADGTG…FTATEFITGD (297 aa)) is pectinesterase 12. Substrate contacts are provided by T312 and Q342. D365 (proton donor; for pectinesterase activity) is an active-site residue. C379 and C399 are joined by a disulfide. Catalysis depends on D386, which acts as the Nucleophile; for pectinesterase activity. 2 N-linked (GlcNAc...) asparagine glycosylation sites follow: N432 and N443. Residues R454 and W456 each contribute to the substrate site. N523 carries N-linked (GlcNAc...) asparagine glycosylation.

The protein in the N-terminal section; belongs to the PMEI family. This sequence in the C-terminal section; belongs to the pectinesterase family. As to expression, expressed in siliques.

The protein localises to the secreted. Its subcellular location is the cell wall. The enzyme catalyses [(1-&gt;4)-alpha-D-galacturonosyl methyl ester](n) + n H2O = [(1-&gt;4)-alpha-D-galacturonosyl](n) + n methanol + n H(+). It participates in glycan metabolism; pectin degradation; 2-dehydro-3-deoxy-D-gluconate from pectin: step 1/5. In terms of biological role, acts in the modification of cell walls via demethylesterification of cell wall pectin. This is Probable pectinesterase/pectinesterase inhibitor 12 (PME12) from Arabidopsis thaliana (Mouse-ear cress).